The sequence spans 1919 residues: Transcription initiation factor TFIID subunit 1 (1919 aa).

Disordered regions lie at residues 1–25 (MAES…EDNS) and 143–169 (DDED…TEKR). Residues 143–158 (DDEDYDEEEEQEEEQA) show a composition bias toward acidic residues. The Ubiquitin-like domain maps to 661–737 (MKIIVKSLGG…VHLIRTKVHL (77 aa)). Disordered stretches follow at residues 1287–1314 (DQKK…NIAL), 1408–1679 (MRTN…RPKE), and 1726–1746 (RSER…KKKL). 3 stretches are compositionally biased toward basic and acidic residues: residues 1465-1476 (SVDEALKGDKLS), 1535-1547 (KPKE…ERRS), and 1555-1565 (SRERGESESHK). Over residues 1566–1587 (PSVSGQPLSSTERNQAASSRHT) the composition is skewed to polar residues. Residues 1628 to 1655 (RSKEMNDHDMSSLEESPRFESRKTKRMA) are compositionally biased toward basic and acidic residues. Residues 1661–1671 (QRQQSFRLSEN) are compositionally biased toward polar residues. Residues 1713-1750 (NEIAEIRRYEEVIRSEREEEERQKAKKKKKKKKLQPEI) adopt a coiled-coil conformation. Residues 1726-1735 (RSEREEEERQ) show a composition bias toward basic and acidic residues. A compositionally biased stretch (basic residues) spans 1736–1745 (KAKKKKKKKK). The region spanning 1794–1911 (KRRKKGEVGL…DDYEDQLKEA (118 aa)) is the Bromo domain.

The protein belongs to the TAF1 family. In terms of assembly, component of the TFIID complex. TFIID is composed of TATA binding protein (TBP) and a number of TBP-associated factors (TAFs) whose MWs range from 14-217 kDa. Interacts with TAF7 and TAF14B, and (via N-terminus) with TBP1 and TBP2. In terms of tissue distribution, expressed in roots, leaves and inflorescences.

The protein resides in the nucleus. Its function is as follows. TAFs are components of the transcription factor IID (TFIID) complex that is essential for mediating regulation of RNA polymerase transcription. Core scaffold of the TFIID complex. This is Transcription initiation factor TFIID subunit 1 (TAF1) from Arabidopsis thaliana (Mouse-ear cress).